Consider the following 872-residue polypeptide: Alanine--tRNA ligase (872 aa).

His567, His571, Cys669, and His673 together coordinate Zn(2+).

The protein belongs to the class-II aminoacyl-tRNA synthetase family. Zn(2+) is required as a cofactor.

The protein resides in the cytoplasm. The catalysed reaction is tRNA(Ala) + L-alanine + ATP = L-alanyl-tRNA(Ala) + AMP + diphosphate. In terms of biological role, catalyzes the attachment of alanine to tRNA(Ala) in a two-step reaction: alanine is first activated by ATP to form Ala-AMP and then transferred to the acceptor end of tRNA(Ala). Also edits incorrectly charged Ser-tRNA(Ala) and Gly-tRNA(Ala) via its editing domain. The polypeptide is Alanine--tRNA ligase (Streptococcus pneumoniae (strain Hungary19A-6)).